The primary structure comprises 215 residues: MKGVYFVSGIDTDIGKTIATGVLAKQLLQQGKSVITQKPVQTGCQNIADDIAVHRKIMGIPMQEADKQGLTMPEIFSYPASPHLAARLDGRALDLDKIRTATQQLAAQYEIVLVEGAGGLMVPLTENLLTIDYIRQQGYPVILITSGRLGSINHTLLSFAALKQYGIRLHSLVFNHIHDSRDAHVAQDSLNYLKCRLKDSFPEAEWLELAKTDAV.

Residue 13–18 (DIGKTI) coordinates ATP. Mg(2+) is bound at residue threonine 17. The active site involves lysine 38. Position 42 (threonine 42) interacts with substrate. Residues aspartate 50, 115–118 (EGAG), and 175–176 (NH) each bind ATP. Mg(2+) is bound by residues aspartate 50 and glutamate 115.

It belongs to the dethiobiotin synthetase family. In terms of assembly, homodimer. The cofactor is Mg(2+).

It is found in the cytoplasm. The enzyme catalyses (7R,8S)-7,8-diammoniononanoate + CO2 + ATP = (4R,5S)-dethiobiotin + ADP + phosphate + 3 H(+). It functions in the pathway cofactor biosynthesis; biotin biosynthesis; biotin from 7,8-diaminononanoate: step 1/2. Its function is as follows. Catalyzes a mechanistically unusual reaction, the ATP-dependent insertion of CO2 between the N7 and N8 nitrogen atoms of 7,8-diaminopelargonic acid (DAPA, also called 7,8-diammoniononanoate) to form a ureido ring. The protein is ATP-dependent dethiobiotin synthetase BioD of Neisseria meningitidis serogroup A / serotype 4A (strain DSM 15465 / Z2491).